Here is a 422-residue protein sequence, read N- to C-terminus: Serine--tRNA ligase (422 aa).

An L-serine-binding site is contributed by 229-231 (TAE). 258–260 (RRE) is a binding site for ATP. Residue E281 coordinates L-serine. 345–348 (EISS) provides a ligand contact to ATP. S379 is a binding site for L-serine.

Belongs to the class-II aminoacyl-tRNA synthetase family. Type-1 seryl-tRNA synthetase subfamily. In terms of assembly, homodimer. The tRNA molecule binds across the dimer.

Its subcellular location is the cytoplasm. It catalyses the reaction tRNA(Ser) + L-serine + ATP = L-seryl-tRNA(Ser) + AMP + diphosphate + H(+). It carries out the reaction tRNA(Sec) + L-serine + ATP = L-seryl-tRNA(Sec) + AMP + diphosphate + H(+). Its pathway is aminoacyl-tRNA biosynthesis; selenocysteinyl-tRNA(Sec) biosynthesis; L-seryl-tRNA(Sec) from L-serine and tRNA(Sec): step 1/1. Catalyzes the attachment of serine to tRNA(Ser). Is also able to aminoacylate tRNA(Sec) with serine, to form the misacylated tRNA L-seryl-tRNA(Sec), which will be further converted into selenocysteinyl-tRNA(Sec). This is Serine--tRNA ligase from Methanosarcina mazei (strain ATCC BAA-159 / DSM 3647 / Goe1 / Go1 / JCM 11833 / OCM 88) (Methanosarcina frisia).